Reading from the N-terminus, the 296-residue chain is Elongation factor Ts (296 aa).

Positions 79 to 82 are involved in Mg(2+) ion dislocation from EF-Tu; sequence TDFV.

It belongs to the EF-Ts family.

The protein localises to the cytoplasm. Its function is as follows. Associates with the EF-Tu.GDP complex and induces the exchange of GDP to GTP. It remains bound to the aminoacyl-tRNA.EF-Tu.GTP complex up to the GTP hydrolysis stage on the ribosome. The protein is Elongation factor Ts (tsf) of Spiroplasma citri.